Here is a 268-residue protein sequence, read N- to C-terminus: Putative hydro-lyase A1S_1268 (268 aa).

The protein belongs to the D-glutamate cyclase family.

The chain is Putative hydro-lyase A1S_1268 from Acinetobacter baumannii (strain ATCC 17978 / DSM 105126 / CIP 53.77 / LMG 1025 / NCDC KC755 / 5377).